The following is a 707-amino-acid chain: Elongation factor G (707 aa).

Residues 9 to 293 (HDVRNIGIMA…GVVDYLPSPE (285 aa)) enclose the tr-type G domain. Residues 18-25 (AHIDAGKT), 90-94 (DTPGH), and 144-147 (NKMD) each bind GTP.

The protein belongs to the TRAFAC class translation factor GTPase superfamily. Classic translation factor GTPase family. EF-G/EF-2 subfamily.

It localises to the cytoplasm. Catalyzes the GTP-dependent ribosomal translocation step during translation elongation. During this step, the ribosome changes from the pre-translocational (PRE) to the post-translocational (POST) state as the newly formed A-site-bound peptidyl-tRNA and P-site-bound deacylated tRNA move to the P and E sites, respectively. Catalyzes the coordinated movement of the two tRNA molecules, the mRNA and conformational changes in the ribosome. This Bifidobacterium longum (strain DJO10A) protein is Elongation factor G.